A 629-amino-acid polypeptide reads, in one-letter code: MPIKILSPQLANQIAAGEVVERPASVVKELVENSLDAGANKIQIDIENGGANLIRIRDNGCGIPKEELSLALARHATSKIADLDDLEAILSLGFRGEALASISSVSRLTLTSRTEEQTEAWQVYAQGRDMETTIKPASHPVGTTVEVANLFFNTPARRKFLRTDKTEFAHIDEVIRRIALTKFNTAFTLTHNGKIIRQYRPAEAINQQLKRVAAICGDDFVKNALRIDWKHDDLHLSGWVATPNFSRTQNDLSYCYINGRMVRDKVISHAIRQAYAQYLPTDAYPAFVLFIDLNPHDVDVNVHPTKHEVRFHQQRLIHDFIYEGISYALNNQEQLNWHTDQSAVENHEENTVREPQPNYSIRPNRAAAGQNSFAPKYYEKPQQNQPHFSNTPVLPNHVSTGYRDYRSDAPSKTEQRLYAELLRTLPPTAQKDISDTAQQNISDTAKIISTEIIECSSHLRTLSLIENRALLLQQNQDFFLLSLEKLQRLQWQLALQQIQIEQQPLLIPIVFRLTEAQFQAWQQYSDNFKKIGFEFIENQAQLRLTLNKVPNVLRTQNLQKCLMAMLTRDENSSPFLTALCAQLECKTFDALADALNLLSDTERLLTQTNRTAFTQLLKPVNWQPLLDEI.

The protein belongs to the DNA mismatch repair MutL/HexB family.

Its function is as follows. This protein is involved in the repair of mismatches in DNA. It is required for dam-dependent methyl-directed DNA mismatch repair. May act as a 'molecular matchmaker', a protein that promotes the formation of a stable complex between two or more DNA-binding proteins in an ATP-dependent manner without itself being part of a final effector complex. The polypeptide is DNA mismatch repair protein MutL (Haemophilus influenzae (strain 86-028NP)).